We begin with the raw amino-acid sequence, 215 residues long: Protein C' (215 aa).

A disordered region spans residues 12–34 (MPSFLKKILKLRGRRQEDESRSR). Residues 15-22 (FLKKILKL) form an involved in self-degradation and in host STAT1 degradation region. Positions 25–35 (RRQEDESRSRM) are enriched in basic and acidic residues. Positions 36 to 66 (LSDSSTQSYQVNQLTSEETEAGSTIPSTPSK) are enriched in polar residues.

This sequence belongs to the respirovirus protein C family. In terms of assembly, the different isoforms interact (via C-terminus) with unphosphorylated and phosphorylated human STAT1 (via N-terminus), favoring the formation of parallel STAT1 homodimers. The different isoforms do not interact with host STAT2. C protein interacts with L protein; this interaction has an inhibitory effect on viral transcription and replication. In terms of processing, protein Y1 is produced not only by alternative initiation, but also by proteolytic cleavage of C'. Only alternative initiation is detected in vitro, whereas in vivo cleavage seems to be predominant.

It is found in the host cytoplasm. Its function is as follows. The different products prevent the establishment of cellular antiviral state by blocking the interferon-alpha/beta (IFN-alpha/beta) and IFN-gamma signaling pathways. They inhibit IFN-alpha/beta induced tyrosine phosphorylation of STAT1 and STAT2. Blocking the IFN-alpha/beta pathway requires binding to STAT1 in the cytoplasm. They inhibit IFN-gamma induced serine phosphorylation of STAT1. Block the IFN-gamma pathway by binding to and stabilizing the parallel form of the STAT1 dimer, further inducing high-molecular-weight complex formation and inhibition of transcription by IFN-gamma. May also have a role in preventing the cell to enter apoptosis. Modulate regulation of viral transcription and replication. Overexpression inhibits the viral RNA polymerase. The absence of all C', C and Y1 proteins leads to viral delayed growth. Plays an important role in virion particles release. Modulates virion shape. This Cavia cutleri (Guinea pig) protein is Protein C' (P/V/C).